The following is a 350-amino-acid chain: Biotin synthase (350 aa).

One can recognise a Radical SAM core domain in the interval 38–256 (NHVQVSTLLS…IAVARIMMPE (219 aa)). The [4Fe-4S] cluster site is built by Cys53, Cys57, and Cys60. [2Fe-2S] cluster-binding residues include Cys97, Cys128, Cys188, and Arg260.

The protein belongs to the radical SAM superfamily. Biotin synthase family. As to quaternary structure, homodimer. It depends on [4Fe-4S] cluster as a cofactor. The cofactor is [2Fe-2S] cluster.

The catalysed reaction is (4R,5S)-dethiobiotin + (sulfur carrier)-SH + 2 reduced [2Fe-2S]-[ferredoxin] + 2 S-adenosyl-L-methionine = (sulfur carrier)-H + biotin + 2 5'-deoxyadenosine + 2 L-methionine + 2 oxidized [2Fe-2S]-[ferredoxin]. The protein operates within cofactor biosynthesis; biotin biosynthesis; biotin from 7,8-diaminononanoate: step 2/2. Catalyzes the conversion of dethiobiotin (DTB) to biotin by the insertion of a sulfur atom into dethiobiotin via a radical-based mechanism. This chain is Biotin synthase, found in Aliivibrio fischeri (strain MJ11) (Vibrio fischeri).